Reading from the N-terminus, the 106-residue chain is Probable NADP-dependent dehydrogenase in aabA 3'region (106 aa).

Residue 4–28 (LITGASSGFGWEAAKLCVAKGHRVI) participates in NADP(+) binding.

This sequence belongs to the short-chain dehydrogenases/reductases (SDR) family.

The sequence is that of Probable NADP-dependent dehydrogenase in aabA 3'region from Dichelobacter nodosus (Bacteroides nodosus).